A 54-amino-acid polypeptide reads, in one-letter code: Lectin alpha chain (54 aa).

Belongs to the leguminous lectin family. As to quaternary structure, tetramer of two alpha and two beta chains.

The polypeptide is Lectin alpha chain (Lathyrus odoratus (Sweet pea)).